The following is a 403-amino-acid chain: tRNA(Met) cytidine acetate ligase (403 aa).

ATP contacts are provided by residues 7-20 (VVEY…HAYH), G101, N164, and 189-190 (RI).

Belongs to the TmcAL family.

It localises to the cytoplasm. It carries out the reaction cytidine(34) in elongator tRNA(Met) + acetate + ATP = N(4)-acetylcytidine(34) in elongator tRNA(Met) + AMP + diphosphate. In terms of biological role, catalyzes the formation of N(4)-acetylcytidine (ac(4)C) at the wobble position of elongator tRNA(Met), using acetate and ATP as substrates. First activates an acetate ion to form acetyladenylate (Ac-AMP) and then transfers the acetyl group to tRNA to form ac(4)C34. This Lysinibacillus sphaericus (strain C3-41) protein is tRNA(Met) cytidine acetate ligase.